The primary structure comprises 163 residues: Nucleotide-binding protein BSU11020 (163 aa).

Belongs to the YajQ family.

Functionally, nucleotide-binding protein. The chain is Nucleotide-binding protein BSU11020 (yitK) from Bacillus subtilis (strain 168).